Consider the following 512-residue polypeptide: 2-isopropylmalate synthase (512 aa).

The Pyruvate carboxyltransferase domain maps to 5 to 268; sequence LIIFDTTLRD…DLNIDTTHIV (264 aa). Residues Asp-14, His-202, His-204, and Asn-239 each contribute to the Mn(2+) site. Positions 394-512 are regulatory domain; it reads AFVSLSQHSE…SQAEKVAAQG (119 aa).

It belongs to the alpha-IPM synthase/homocitrate synthase family. LeuA type 1 subfamily. Homodimer. The cofactor is Mn(2+).

The protein resides in the cytoplasm. It carries out the reaction 3-methyl-2-oxobutanoate + acetyl-CoA + H2O = (2S)-2-isopropylmalate + CoA + H(+). It functions in the pathway amino-acid biosynthesis; L-leucine biosynthesis; L-leucine from 3-methyl-2-oxobutanoate: step 1/4. Functionally, catalyzes the condensation of the acetyl group of acetyl-CoA with 3-methyl-2-oxobutanoate (2-ketoisovalerate) to form 3-carboxy-3-hydroxy-4-methylpentanoate (2-isopropylmalate). The chain is 2-isopropylmalate synthase from Variovorax paradoxus (strain S110).